A 376-amino-acid polypeptide reads, in one-letter code: Cyclic GMP-AMP synthase-like receptor 1 (376 aa).

Glu77 and Asp79 together coordinate Mg(2+).

It belongs to the mab-21 family. Requires Mg(2+) as cofactor. It depends on Mn(2+) as a cofactor.

It carries out the reaction UTP + ATP = 3',3'-cUAMP + 2 diphosphate. Functionally, nucleotidyltransferase that catalyzes the formation of cyclic UMP-AMP (3',3'-cUAMP) from ATP and UTP and plays a key role in innate immunity. Acts as a key sensor of double-stranded RNA (dsRNA), the presence of dsRNA in the cytoplasm being a danger signal that triggers the immune responses. Directly binds dsRNA, activating the nucleotidyltransferase activity, leading to synthesis of 3',3'-cUAMP, a second messenger that binds to and activates Sting, thereby triggering the immune response via activation of the NF-kappa-B transcription factor. In Stylophora pistillata (Smooth cauliflower coral), this protein is Cyclic GMP-AMP synthase-like receptor 1.